Reading from the N-terminus, the 409-residue chain is Shaggy-related protein kinase gamma (409 aa).

A2 is modified (N-acetylalanine). The Protein kinase domain occupies 73-357 (YMAERVVGHG…ALDSLVHPFF (285 aa)). Residues 79-87 (VGHGSFGVV) and K102 each bind ATP. The active-site Proton acceptor is D198. Y233 is modified (phosphotyrosine).

Belongs to the protein kinase superfamily. CMGC Ser/Thr protein kinase family. GSK-3 subfamily. In terms of assembly, binds to KIB1. Component of a complex made of POLAR, BASL, ASK7/BIN2 and ASK3/SK12. Binds to POLAR and BASL. Post-translationally, autophosphorylated mainly on threonine and serine residues. Roots, shoots and leaves.

It is found in the cytoplasm. The protein resides in the cell cortex. The catalysed reaction is L-seryl-[protein] + ATP = O-phospho-L-seryl-[protein] + ADP + H(+). It carries out the reaction L-threonyl-[protein] + ATP = O-phospho-L-threonyl-[protein] + ADP + H(+). Functionally, may mediate extracellular signals to regulate transcription in differentiating cells. Probably involved first at the cortical polarity site, to restrict MAPK signaling and promote asymmetric cell division (ACD), and second in the nucleus of stomatal lineage ground cells (SLGCs) or meristemoids, to limit cell division and to promote differentiation into pavement or stomatal guard cells, respectively. Phosphorylate YDA and SPCH in vitro. In Arabidopsis thaliana (Mouse-ear cress), this protein is Shaggy-related protein kinase gamma.